Reading from the N-terminus, the 133-residue chain is Nickel-responsive regulator (133 aa).

Residues His76, His87, His89, and Cys95 each contribute to the Ni(2+) site.

Belongs to the transcriptional regulatory CopG/NikR family. As to quaternary structure, homotetramer. Ni(2+) serves as cofactor.

Its function is as follows. Transcriptional repressor of the nikABCDE operon. Is active in the presence of excessive concentrations of intracellular nickel. In Salmonella choleraesuis (strain SC-B67), this protein is Nickel-responsive regulator.